A 165-amino-acid polypeptide reads, in one-letter code: Nucleotide-binding protein PMM0481 (165 aa).

The protein belongs to the YajQ family.

Functionally, nucleotide-binding protein. This is Nucleotide-binding protein PMM0481 from Prochlorococcus marinus subsp. pastoris (strain CCMP1986 / NIES-2087 / MED4).